Reading from the N-terminus, the 138-residue chain is Putative nickel-responsive regulator (138 aa).

Histidine 78, histidine 89, histidine 91, and cysteine 97 together coordinate Ni(2+).

The protein belongs to the transcriptional regulatory CopG/NikR family. It depends on Ni(2+) as a cofactor.

Its function is as follows. Transcriptional regulator. The polypeptide is Putative nickel-responsive regulator (Pyrococcus furiosus (strain ATCC 43587 / DSM 3638 / JCM 8422 / Vc1)).